The chain runs to 151 residues: Mini-ribonuclease 3 (151 aa).

The active site involves D28.

The protein belongs to the MrnC RNase family. Homodimer. Requires Mg(2+) as cofactor.

It localises to the cytoplasm. Its function is as follows. Involved in correct processing of both the 5' and 3' ends of 23S rRNA precursor. Processes 30S rRNA precursor transcript even in absence of ribonuclease 3 (Rnc); Rnc processes 30S rRNA into smaller rRNA precursors. In Clostridium tetani (strain Massachusetts / E88), this protein is Mini-ribonuclease 3.